A 523-amino-acid polypeptide reads, in one-letter code: Mitochondrial distribution and morphology protein 34 (523 aa).

Residues 1 to 200 (MSFKVNWKSL…LPTLIHQFSL (200 aa)) form the SMP-LTD domain. Residues 489-523 (ELSMDRSGKRKQRNYGSATYESENPIVAPPPPYSH) are disordered.

The protein belongs to the MDM34 family. In terms of assembly, component of the ER-mitochondria encounter structure (ERMES) or MDM complex, composed of MMM1, MDM10, MDM12 and MDM34.

The protein resides in the mitochondrion outer membrane. In terms of biological role, component of the ERMES/MDM complex, which serves as a molecular tether to connect the endoplasmic reticulum (ER) and mitochondria. Components of this complex are involved in the control of mitochondrial shape and protein biogenesis, and function in nonvesicular lipid trafficking between the ER and mitochondria. MDM34 is required for the interaction of the ER-resident membrane protein MMM1 and the outer mitochondrial membrane-resident beta-barrel protein MDM10. The protein is Mitochondrial distribution and morphology protein 34 of Scheffersomyces stipitis (strain ATCC 58785 / CBS 6054 / NBRC 10063 / NRRL Y-11545) (Yeast).